The primary structure comprises 136 residues: Large ribosomal subunit protein uL16 (136 aa).

Belongs to the universal ribosomal protein uL16 family. In terms of assembly, part of the 50S ribosomal subunit.

Its function is as follows. Binds 23S rRNA and is also seen to make contacts with the A and possibly P site tRNAs. This chain is Large ribosomal subunit protein uL16, found in Glaesserella parasuis serovar 5 (strain SH0165) (Haemophilus parasuis).